The sequence spans 541 residues: FAD-linked oxidoreductase pynB (541 aa).

The first 20 residues, 1 to 20, serve as a signal peptide directing secretion; it reads MRLSARGFVWSALLACTASA. 10 N-linked (GlcNAc...) asparagine glycosylation sites follow: Asn30, Asn57, Asn117, Asn131, Asn158, Asn253, Asn306, Asn343, Asn430, and Asn461. The 172-residue stretch at 71–242 folds into the FAD-binding PCMH-type domain; it reads FNEFPALIAY…VDFDLQLMQF (172 aa).

Belongs to the oxygen-dependent FAD-linked oxidoreductase family. FAD serves as cofactor.

Its pathway is secondary metabolite biosynthesis. FAD-linked oxidoreductase; part of the gene cluster that mediates the biosynthesis of pyranonigrins, a family of antioxidative compounds. The first step of pyranonigrins biosynthesis is performed by the hybrid PKS-NRPS synthetase that condenses 6 malonyl-CoA units to an acetyl starter unit, to form a 1,3,5-trioxotetradecane-6,8-dienyl-ACP. The enoyl reductase (ER) domain of pynA is likely to be functional during the first two rounds of polyketide chain extension, to generate the saturated C-C bonds of the alkyl side chain. PynA subsequently forms the amide bond between the acyl chain and L-serine. Although pynA has a terminal reductase domain, it appears to require the thioesterase pynI for the release of the straight-chain intermediate from pynA via the formation of a tetramic acid pyranonigrin J. The methyltransferase pynC then coverts pyranonigrin J to pyranonigrin I via N-methylation. The FAD-dependent monooxygenase pynG catalyzes an epoxidation-mediated cyclization to form the dihydro-gamma-pyrone moiety, followed by pynD-catalyzed oxidation of the alcohol to the ketone and enolization to yield the characteristic tetramic acid-fused gamma-pyrone core of pyranonigrin H. Pyranonigrin H is substrate of pynH for dehydration-mediated exo-methylene formation from the serine side chain to produce pyranonigrin E, before the oxidase pynE reduces the exo-methylene of pyranonigrin E into a pendant methyl to form pyranonigrin G. The FAD-linked oxidoreductase pynB performs the reverse reaction and converts pyranonigrin G back to pyranonigrin E. The protein is FAD-linked oxidoreductase pynB of Aspergillus niger (strain ATCC MYA-4892 / CBS 513.88 / FGSC A1513).